A 283-amino-acid polypeptide reads, in one-letter code: NAD(P)H-hydrate epimerase (283 aa).

The transit peptide at 1-28 directs the protein to the mitochondrion; that stretch reads MLGVRALFGIGLLVTSRGGFVLTHTRAC. Positions 61–270 constitute a YjeF N-terminal domain; the sequence is AQQIDEELFS…VLEQKYQLNL (210 aa). (6S)-NADPHX is bound at residue 115 to 119; it reads NNGGD. Asparagine 116 and aspartate 180 together coordinate K(+). (6S)-NADPHX is bound by residues 184–190 and aspartate 213; that span reads GFSFKGA. Residue serine 216 coordinates K(+).

The protein belongs to the NnrE/AIBP family. In terms of assembly, homodimer. Interacts with apoa1a. Binds to high-density lipoprotein. K(+) is required as a cofactor.

It is found in the mitochondrion. The protein resides in the secreted. It carries out the reaction (6R)-NADHX = (6S)-NADHX. It catalyses the reaction (6R)-NADPHX = (6S)-NADPHX. Its function is as follows. Catalyzes the epimerization of the S- and R-forms of NAD(P)HX, a damaged form of NAD(P)H that is a result of enzymatic or heat-dependent hydration. This is a prerequisite for the S-specific NAD(P)H-hydrate dehydratase to allow the repair of both epimers of NAD(P)HX. The chain is NAD(P)H-hydrate epimerase from Danio rerio (Zebrafish).